We begin with the raw amino-acid sequence, 394 residues long: Elongation factor Tu (394 aa).

The tr-type G domain maps to Lys-10 to Val-204. The interval Gly-19–Thr-26 is G1. Gly-19–Thr-26 lines the GTP pocket. Position 26 (Thr-26) interacts with Mg(2+). The interval Gly-60 to Ser-64 is G2. The G3 stretch occupies residues Asp-81–Gly-84. GTP contacts are provided by residues Asp-81 to His-85 and Asn-136 to Asp-139. The segment at Asn-136–Asp-139 is G4. Residues Ser-174 to Leu-176 form a G5 region.

Belongs to the TRAFAC class translation factor GTPase superfamily. Classic translation factor GTPase family. EF-Tu/EF-1A subfamily. As to quaternary structure, monomer.

Its subcellular location is the cytoplasm. It carries out the reaction GTP + H2O = GDP + phosphate + H(+). In terms of biological role, GTP hydrolase that promotes the GTP-dependent binding of aminoacyl-tRNA to the A-site of ribosomes during protein biosynthesis. This chain is Elongation factor Tu, found in Rickettsia felis (strain ATCC VR-1525 / URRWXCal2) (Rickettsia azadi).